We begin with the raw amino-acid sequence, 76 residues long: Acyl carrier protein (76 aa).

The Carrier domain occupies 2 to 76 (SDIAERVKKI…QAIDYIQSHT (75 aa)). Residue Ser36 is modified to O-(pantetheine 4'-phosphoryl)serine.

This sequence belongs to the acyl carrier protein (ACP) family. Post-translationally, 4'-phosphopantetheine is transferred from CoA to a specific serine of apo-ACP by AcpS. This modification is essential for activity because fatty acids are bound in thioester linkage to the sulfhydryl of the prosthetic group.

Its subcellular location is the cytoplasm. Its pathway is lipid metabolism; fatty acid biosynthesis. Its function is as follows. Carrier of the growing fatty acid chain in fatty acid biosynthesis. This chain is Acyl carrier protein, found in Methylococcus capsulatus (strain ATCC 33009 / NCIMB 11132 / Bath).